Reading from the N-terminus, the 454-residue chain is Protein odr-4 homolog (454 aa).

2 helical membrane passes run 82 to 102 (MLPG…ELAN) and 432 to 452 (IGVI…FHYF).

The protein belongs to the ODR-4 family. In terms of tissue distribution, ubiquitously expressed.

It localises to the membrane. Its function is as follows. May play a role in the trafficking of a subset of G-protein coupled receptors. This chain is Protein odr-4 homolog, found in Homo sapiens (Human).